The chain runs to 242 residues: 3-dehydroquinate dehydratase (242 aa).

3-dehydroquinate-binding positions include 39-41 (EIR) and R73. The active-site Proton donor/acceptor is the H135. Catalysis depends on K162, which acts as the Schiff-base intermediate with substrate. 3-dehydroquinate is bound by residues R203 and Q228.

Belongs to the type-I 3-dehydroquinase family. Homodimer.

It carries out the reaction 3-dehydroquinate = 3-dehydroshikimate + H2O. The protein operates within metabolic intermediate biosynthesis; chorismate biosynthesis; chorismate from D-erythrose 4-phosphate and phosphoenolpyruvate: step 3/7. Functionally, involved in the third step of the chorismate pathway, which leads to the biosynthesis of aromatic amino acids. Catalyzes the cis-dehydration of 3-dehydroquinate (DHQ) and introduces the first double bond of the aromatic ring to yield 3-dehydroshikimate. This Methanosarcina mazei (strain ATCC BAA-159 / DSM 3647 / Goe1 / Go1 / JCM 11833 / OCM 88) (Methanosarcina frisia) protein is 3-dehydroquinate dehydratase.